The primary structure comprises 448 residues: 3-phosphoshikimate 1-carboxyvinyltransferase (448 aa).

3-phosphoshikimate is bound by residues Lys-38, Ser-39, and Arg-43. A phosphoenolpyruvate-binding site is contributed by Lys-38. The phosphoenolpyruvate site is built by Gly-111 and Arg-140. 3-phosphoshikimate is bound by residues Ser-185, Gln-187, Asp-335, and Lys-362. Residue Gln-187 participates in phosphoenolpyruvate binding. The Proton acceptor role is filled by Asp-335. Residues Arg-366 and Arg-408 each contribute to the phosphoenolpyruvate site.

It belongs to the EPSP synthase family. In terms of assembly, monomer.

The protein resides in the cytoplasm. It catalyses the reaction 3-phosphoshikimate + phosphoenolpyruvate = 5-O-(1-carboxyvinyl)-3-phosphoshikimate + phosphate. It functions in the pathway metabolic intermediate biosynthesis; chorismate biosynthesis; chorismate from D-erythrose 4-phosphate and phosphoenolpyruvate: step 6/7. Its function is as follows. Catalyzes the transfer of the enolpyruvyl moiety of phosphoenolpyruvate (PEP) to the 5-hydroxyl of shikimate-3-phosphate (S3P) to produce enolpyruvyl shikimate-3-phosphate and inorganic phosphate. This is 3-phosphoshikimate 1-carboxyvinyltransferase from Gloeothece citriformis (strain PCC 7424) (Cyanothece sp. (strain PCC 7424)).